The primary structure comprises 281 residues: 2,3,4,5-tetrahydropyridine-2,6-dicarboxylate N-succinyltransferase (281 aa).

Residues Arg108 and Asp145 each contribute to the substrate site.

This sequence belongs to the transferase hexapeptide repeat family. Homotrimer.

The protein resides in the cytoplasm. The enzyme catalyses (S)-2,3,4,5-tetrahydrodipicolinate + succinyl-CoA + H2O = (S)-2-succinylamino-6-oxoheptanedioate + CoA. The protein operates within amino-acid biosynthesis; L-lysine biosynthesis via DAP pathway; LL-2,6-diaminopimelate from (S)-tetrahydrodipicolinate (succinylase route): step 1/3. This chain is 2,3,4,5-tetrahydropyridine-2,6-dicarboxylate N-succinyltransferase, found in Nitrobacter hamburgensis (strain DSM 10229 / NCIMB 13809 / X14).